The following is a 344-amino-acid chain: Uroporphyrinogen decarboxylase (344 aa).

Substrate is bound by residues 23-27 (RQAGR), D73, Y149, T204, and H321.

Belongs to the uroporphyrinogen decarboxylase family. Homodimer.

The protein localises to the cytoplasm. It catalyses the reaction uroporphyrinogen III + 4 H(+) = coproporphyrinogen III + 4 CO2. Its pathway is porphyrin-containing compound metabolism; protoporphyrin-IX biosynthesis; coproporphyrinogen-III from 5-aminolevulinate: step 4/4. Catalyzes the decarboxylation of four acetate groups of uroporphyrinogen-III to yield coproporphyrinogen-III. The sequence is that of Uroporphyrinogen decarboxylase from Francisella tularensis subsp. tularensis (strain FSC 198).